Here is a 131-residue protein sequence, read N- to C-terminus: MSSAAEKKPASKAPAEKKPAAKKTSTSVDGKKRSKVRKETYSSYIYKVLKQTHPDTGISQKSMSILNSFVNDIFERIATEASKLAAYNKKSTISAREIQTAVRLILPGELAKHAVSEGTRAVTKYSSSTQA.

The span at 1–19 shows a compositional bias: basic and acidic residues; the sequence is MSSAAEKKPASKAPAEKKP. The disordered stretch occupies residues 1–37; that stretch reads MSSAAEKKPASKAPAEKKPAAKKTSTSVDGKKRSKVR. An N6-acetyllysine; alternate mark is found at Lys7 and Lys8. Glycyl lysine isopeptide (Lys-Gly) (interchain with G-Cter in SUMO); alternate cross-links involve residues Lys7 and Lys8. Position 11 is a phosphoserine (Ser11). Lys12 is subject to N6-acetyllysine. Lys17, Lys18, Lys22, and Lys23 each carry N6-acetyllysine; alternate. Residues Lys17 and Lys18 each participate in a glycyl lysine isopeptide (Lys-Gly) (interchain with G-Cter in SUMO); alternate cross-link. The residue at position 22 (Lys22) is an N6-butyryllysine; alternate. Residue Lys23 is modified to N6-methyllysine; alternate. Residue Lys35 is modified to N6-succinyllysine. Lys38 is subject to N6,N6-dimethyllysine. Position 47 is an N6-succinyllysine (Lys47). Lys124 participates in a covalent cross-link: Glycyl lysine isopeptide (Lys-Gly) (interchain with G-Cter in ubiquitin).

Belongs to the histone H2B family. In terms of assembly, the nucleosome is a histone octamer containing two molecules each of H2A, H2B, H3 and H4 assembled in one H3-H4 heterotetramer and two H2A-H2B heterodimers. The octamer wraps approximately 147 bp of DNA. Interacts with NAP1. Post-translationally, monoubiquitinated by the RAD6/UBC2-BRE1 complex to form H2BK123ub1. H2BK123ub1 gives a specific tag for epigenetic transcriptional activation and is also prerequisite for H3K4me and H3K79me formation. H2BK123ub1 also modulates the formation of double-strand breaks during meiosis and is a prerequisite for DNA-damage checkpoint activation. Deubiquitination is performed by UBP8 in presence of SGF11. Phosphorylated by STE20 to form H2BS10ph during progression through meiotic prophase. May be correlated with chromosome condensation. H2BS10ph is also formed after H(2)O(2) treatment, and is a step leading to apoptosis. In terms of processing, acetylated by GCN5, a component of the SAGA complex, to form H2BK11ac and H2BK16ac. H2BK16ac can also be formed by ESA1, a component of the NuA4 histone acetyltransferase (HAT) complex. Acetylation of N-terminal lysines and particularly formation of H2BK11acK16ac has a positive effect on transcription. Post-translationally, sumoylation to form H2BK6su or H2BK7su, and probably also H2BK16su or H2BK17su, occurs preferentially near the telomeres and represses gene transcription.

Its subcellular location is the nucleus. It localises to the chromosome. Functionally, core component of nucleosome. Nucleosomes wrap and compact DNA into chromatin, limiting DNA accessibility to the cellular machineries which require DNA as a template. Histones thereby play a central role in transcription regulation, DNA repair, DNA replication and chromosomal stability. DNA accessibility is regulated via a complex set of post-translational modifications of histones, also called histone code, and nucleosome remodeling. The sequence is that of Histone H2B.2 (HTB2) from Saccharomyces cerevisiae (strain ATCC 204508 / S288c) (Baker's yeast).